Consider the following 580-residue polypeptide: Glutamine--tRNA ligase (580 aa).

The short motif at 41–51 is the 'HIGH' region element; it reads PEPNGYLHIGH. ATP-binding positions include 42 to 44 and 48 to 54; these read EPN and HIGHAKA. L-glutamine is bound by residues Asp74 and Tyr218. ATP is bound by residues Thr237, 285–286, and 293–295; these read RL and MSK. The 'KMSKS' region signature appears at 292-296; that stretch reads VMSKR.

It belongs to the class-I aminoacyl-tRNA synthetase family. Monomer.

The protein resides in the cytoplasm. The catalysed reaction is tRNA(Gln) + L-glutamine + ATP = L-glutaminyl-tRNA(Gln) + AMP + diphosphate. This Xylella fastidiosa (strain Temecula1 / ATCC 700964) protein is Glutamine--tRNA ligase.